Reading from the N-terminus, the 320-residue chain is Pyrroline-5-carboxylate reductase 2 (320 aa).

Serine 2 carries the N-acetylserine modification. Residues 6–11 (IGAGQL) and serine 34 each bind NADP(+). Residues alanine 8, glutamine 10, leucine 11, serine 34, glutamate 36, asparagine 56, valine 70, lysine 71, and alanine 97 each coordinate NADPH. NADP(+)-binding positions include asparagine 56, 69 to 72 (AVKP), and 95 to 97 (CAA). Glutamate 164 serves as a coordination point for L-proline. Asparagine 230 provides a ligand contact to NADPH. Residues alanine 237 and threonine 238 each coordinate L-proline. Positions 295-305 (PTVSTLTPSSP) are enriched in low complexity. The segment at 295–320 (PTVSTLTPSSPGKLLTRSLALGGKKD) is disordered. Position 304 is a phosphoserine (serine 304).

Belongs to the pyrroline-5-carboxylate reductase family. Homodecamer; composed of 5 homodimers. Interacts with LTO1.

It is found in the cytoplasm. The protein localises to the mitochondrion. It catalyses the reaction L-proline + NADP(+) = (S)-1-pyrroline-5-carboxylate + NADPH + 2 H(+). The enzyme catalyses L-proline + NAD(+) = (S)-1-pyrroline-5-carboxylate + NADH + 2 H(+). Its pathway is amino-acid biosynthesis; L-proline biosynthesis; L-proline from L-glutamate 5-semialdehyde: step 1/1. In terms of biological role, oxidoreductase that catalyzes the last step in proline biosynthesis, which corresponds to the reduction of pyrroline-5-carboxylate to L-proline using NAD(P)H. At physiologic concentrations, has higher specific activity in the presence of NADH. Involved in cellular response to oxidative stress. In some cell types, such as erythrocytes, its primary function may be the generation of NADP(+). This chain is Pyrroline-5-carboxylate reductase 2 (PYCR2), found in Macaca fascicularis (Crab-eating macaque).